The primary structure comprises 3010 residues: Genome polyprotein (3010 aa).

Ser2 carries the post-translational modification N-acetylserine; by host. The interval Ser2–Lys23 is interaction with STAT1. Residues Ser2–Pro58 form an interaction with EIF2AK2/PKR region. An interaction with DDX3X region spans residues Ser2–Arg59. The interval Ser2–Ala75 is disordered. Over Ser2 to Asn168 the chain is Cytoplasmic. Short sequence motifs (nuclear localization signal) lie at residues Pro5–Arg13 and Pro38–Arg43. Basic residues predominate over residues Pro7 to Asn16. Residues Gly32–Arg47 show a composition bias toward low complexity. Ser53 carries the post-translational modification Phosphoserine; by host. Short sequence motifs (nuclear localization signal) lie at residues Pro58 to Pro64 and Pro66 to Pro71. Residues Pro58–Ala68 are compositionally biased toward basic residues. At Ser99 the chain carries Phosphoserine; by host. The tract at residues Pro112 to Ala152 is important for endoplasmic reticulum and mitochondrial localization. Residue Ser116 is modified to Phosphoserine; by host PKA. Positions Val122–Ser173 are interaction with APOA2. Residues Tyr164–Gly167 are important for lipid droplets localization. Residues Leu169–Ala189 form a helical membrane-spanning segment. A propeptide spans Leu178–Ala191 (ER anchor for the core protein, removed in mature form by host signal peptidase). At Ser190–Gly358 the chain is on the lumenal side. Residues Asn196, Asn209, Asn234, and Asn250 are each glycosylated (N-linked (GlcNAc...) asparagine; by host). Positions Leu265–Arg296 are important for fusion. The N-linked (GlcNAc...) asparagine; by host glycan is linked to Asn305. The helical transmembrane segment at Leu359–Ala379 threads the bilayer. Residues Gly380–Leu725 are Lumenal-facing. The tract at residues Thr385–Ile411 is HVR1. N-linked (GlcNAc...) (high mannose) asparagine; by host glycans are attached at residues Asn417, Asn423, Asn430, and Asn448. Disulfide bonds link Cys429-Cys552, Cys452-Cys459, Cys486-Cys494, and Cys503-Cys508. The HVR2 stretch occupies residues Tyr474–Ser479. A glycan (N-linked (GlcNAc...) asparagine; by host) is linked at Asn478. The segment at Ser480–Pro493 is CD81-binding 1. N-linked (GlcNAc...) (high mannose) asparagine; by host glycosylation occurs at Asn532. The N-linked (GlcNAc...) asparagine; by host glycan is linked to Asn540. The CD81-binding 2 stretch occupies residues Pro544–Gly551. The N-linked (GlcNAc...) (high mannose) asparagine; by host glycan is linked to Asn556. The cysteines at positions 564 and 569 are disulfide-linked. Asn576 carries an N-linked (GlcNAc...) (high mannose) asparagine; by host glycan. Cystine bridges form between Cys581–Cys585, Cys597–Cys620, and Cys607–Cys644. N-linked (GlcNAc...) (high mannose) asparagine; by host glycans are attached at residues Asn623 and Asn645. A disulfide bridge connects residues Cys652 and Cys677. Positions Ser660–Glu671 are PKR/eIF2-alpha phosphorylation homology domain (PePHD). The helical transmembrane segment at Leu726 to Ala746 threads the bilayer. At Ala747–Ala757 the chain is on the lumenal side. The helical transmembrane segment at Ser758–Ile778 threads the bilayer. Residues Lys779–Arg781 lie on the Cytoplasmic side of the membrane. Residues Leu782 to Leu803 traverse the membrane as a helical segment. Residues Pro804–Glu813 are Lumenal-facing. Residues Met814 to Tyr834 traverse the membrane as a helical segment. Topologically, residues Tyr835–Phe838 are cytoplasmic. The helical transmembrane segment at Leu839–Val859 threads the bilayer. The Lumenal segment spans residues Trp860–His881. The helical transmembrane segment at Pro882 to Leu902 threads the bilayer. The Peptidase C18 domain maps to Gln903–Leu1026. Topologically, residues Gln903 to Thr1657 are cytoplasmic. A protease NS2-3 region spans residues Ala904–Arg1206. Residue Cys922 is the site of S-palmitoyl cysteine; by host attachment. Residues Ala929 to Val949 are interaction with host SCPS1. Active-site for protease NS2 activity; shared with dimeric partner residues include His952, Glu972, and Cys993. The Peptidase S29 domain occupies Ala1027–Pro1208. Residues His1083 and Asp1107 each act as charge relay system; for serine protease NS3 activity in the active site. Zn(2+) is bound by residues Cys1123 and Cys1125. Ser1165 functions as the Charge relay system; for serine protease NS3 activity in the catalytic mechanism. Zn(2+) is bound by residues Cys1171 and His1175. Residues Pro1217–Asn1369 form the Helicase ATP-binding domain. Ala1230–Ser1237 is a binding site for ATP. Residues Ser1237 and Glu1317 each contribute to the Mg(2+) site. The DECH box signature appears at Asp1316–His1319. The interval Gln1486–Gly1497 is RNA-binding. A helical transmembrane segment spans residues Ser1658–Gly1678. Positions Ser1679–Gly1690 are NS3-binding. Topologically, residues Ser1679–Asn1805 are cytoplasmic. A helical transmembrane segment spans residues Thr1806–Ser1824. Topologically, residues Ala1825–Ala1828 are lumenal. Residues Phe1829 to Val1849 traverse the membrane as a helical segment. Residue Asp1850 is a topological domain, cytoplasmic. The chain crosses the membrane as a helical span at residues Ile1851–Gly1871. Residues Glu1872–Asn1881 are Lumenal-facing. The chain crosses the membrane as a helical span at residues Leu1882–Leu1902. Topologically, residues Arg1903 to Cys1972 are cytoplasmic. 2 S-palmitoyl cysteine; by host lipidation sites follow: Cys1968 and Cys1972. Residues Ser1973–Arg2002 lie within the membrane without spanning it. The Cytoplasmic segment spans residues Leu2003–Arg2989. Zn(2+)-binding residues include Cys2011, Cys2029, Cys2031, and Cys2052. The tract at residues Glu2120–Ala2208 is FKBP8-binding. A transcriptional activation region spans residues Glu2120–Thr2332. The interval Pro2135 to Pro2139 is interaction with non-structural protein 4A. The disordered stretch occupies residues Lys2187–His2219. The tract at residues Arg2189 to Pro2441 is interaction with host SKP2. Ser2194 bears the Phosphoserine; by host; in p56 mark. Over residues Ser2194–Leu2211 the composition is skewed to low complexity. Phosphoserine; by host; in p58 is present on residues Ser2197, Ser2201, Ser2204, Ser2207, and Ser2210. Positions Ser2210–Lys2249 are ISDR. The segment at Ser2210–Leu2275 is interaction with EIF2AK2/PKR. The segment at Lys2249–Tyr2306 is NS4B-binding. The short motif at Pro2322–Pro2325 is the SH3-binding element. A Nuclear localization signal motif is present at residues Pro2326–Val2334. Residue Lys2350 forms a Glycyl lysine isopeptide (Lys-Gly) (interchain with G-Cter in ubiquitin) linkage. Positions Thr2351 to Ala2365 are enriched in polar residues. Positions Thr2351 to Thr2407 are disordered. The interval Ser2354 to Asp2377 is V3. Ser2448 and Ser2461 each carry phosphoserine; by host. Residues Pro2633–Asp2751 enclose the RdRp catalytic domain. Mg(2+) contacts are provided by Asp2639, Asp2737, and Asp2738. Residues Trp2990–Arg3010 traverse the membrane as a helical segment.

It belongs to the hepacivirus polyprotein family. In terms of assembly, homooligomer. Interacts with E1 (via C-terminus). Interacts with the non-structural protein 5A. Interacts (via N-terminus) with host STAT1 (via SH2 domain); this interaction results in decreased STAT1 phosphorylation and ubiquitin-mediated proteasome-dependent STAT1 degradation, leading to decreased IFN-stimulated gene transcription. Interacts with host STAT3; this interaction constitutively activates STAT3. Interacts with host LTBR receptor. Interacts with host TNFRSF1A receptor and possibly induces apoptosis. Interacts with host HNRPK. Interacts with host YWHAE. Interacts with host UBE3A/E6AP. Interacts with host DDX3X. Interacts with host APOA2. Interacts with host RXRA protein. Interacts with host SP110 isoform 3/Sp110b; this interaction sequesters the transcriptional corepressor SP110 away from the nucleus. Interacts with host CREB3 nuclear transcription protein; this interaction triggers cell transformation. Interacts with host ACY3. Interacts with host C1QR1. Interacts with host RBM24; this interaction, which enhances the interaction of the mature core protein with 5'-UTR, may inhibit viral translation and favor replication. Interacts with host EIF2AK2/PKR; this interaction induces the autophosphorylation of EIF2AK2. Part of the viral assembly initiation complex composed of NS2, E1, E2, NS3, NS4A, NS5A and the mature core protein. Forms a heterodimer with envelope glycoprotein E2. Interacts with mature core protein. Interacts with protease NS2. The heterodimer E1/E2 interacts with host CLDN1; this interaction plays a role in viral entry into host cell. Interacts with host SPSB2 (via C-terminus). Part of the viral assembly initiation complex composed of NS2, E1, E2, NS3, NS4A, NS5A and the mature core protein. Interacts with host NEURL3; this interaction prevents E1 binding to glycoprotein E2. As to quaternary structure, forms a heterodimer with envelope glycoprotein E1. Interacts with host CD81 and SCARB1 receptors; these interactions play a role in viral entry into host cell. Interacts with host EIF2AK2/PKR; this interaction inhibits EIF2AK2 and probably allows the virus to evade the innate immune response. Interacts with host CD209/DC-SIGN and CLEC4M/DC-SIGNR. Interact with host SPCS1; this interaction is essential for viral particle assembly. Interacts with protease NS2. The heterodimer E1/E2 interacts with host CLDN1; this interaction plays a role in viral entry into host cell. Part of the viral assembly initiation complex composed of NS2, E1, E2, NS3, NS4A, NS5A and the mature core protein. Interacts with host SLC3A2/4F2hc; the interaction may facilitate viral entry into host cell. Interacts with human PLSCR1. In terms of assembly, homohexamer. Homoheptamer. Interacts with protease NS2. Homodimer. Interacts with host SPCS1; this interaction is essential for viral particle assembly. Interacts with envelope glycoprotein E1. Interacts with envelope glycoprotein E2. Interacts with viroporin p7. Interacts with serine protease/helicase NS3. Part of the replication complex composed of NS2, NS3, NS4A, NS4B, NS5A and the RNA-directed RNA polymerase embedded in an ER-derived membranous web. Part of the viral assembly initiation complex composed of NS2, E1, E2, NS3, NS4A, NS5A and the mature core protein. As to quaternary structure, interacts with protease NS2. Interacts with non-structural protein 4A; this interaction stabilizes the folding of NS3 serine protease. NS3-NS4A interaction is essential for NS3 activation and allows membrane anchorage of the latter. NS3/NS4A complex also prevents phosphorylation of host IRF3, thus preventing the establishment of dsRNA induced antiviral state. Interacts with host MAVS; this interaction leads to the cleavage and inhibition of host MAVS. Interacts with host TICAM1; this interaction leads to the cleavage and inhibition of host TICAM1. Interacts with host TANK-binding kinase/TBK1; this interaction results in the inhibition of the association between TBK1 and IRF3, which leads to the inhibition of IRF3 activation. Interacts with host RBM24. Part of the replication complex composed of NS2, NS3, NS4A, NS4B, NS5A and the RNA-directed RNA polymerase embedded in an ER-derived membranous web. Part of the viral assembly initiation complex composed of NS2, E1, E2, NS3, NS4A, NS5A and the mature core protein. In terms of assembly, interacts with NS3 serine protease; this interaction stabilizes the folding of NS3 serine protease. NS3-NS4A interaction is essential for NS3 activation and allows membrane anchorage of the latter. Interacts with non-structural protein 5A (via N-terminus). Part of the replication complex composed of NS2, NS3, NS4A, NS4B, NS5A and the RNA-directed RNA polymerase embedded in an ER-derived membranous web. Part of the viral assembly initiation complex composed of NS2, E1, E2, NS3, NS4A, NS5A and the mature core protein. Homomultimer. Interacts with non-structural protein NS5A. Interacts with host PLA2G4C; this interaction likely initiates the recruitment of replication complexes to lipid droplets. Interacts with host STING; this interaction disrupts the interaction between STING and TBK1 thereby suppressing the interferon signaling. Part of the replication complex composed of NS2, NS3, NS4A, NS4B, NS5A and the RNA-directed RNA polymerase embedded in an ER-derived membranous web. As to quaternary structure, monomer. Homodimer; dimerization is required for RNA-binding. Interacts with the mature core protein. Interacts (via N-terminus) with non-structural protein 4A. Interacts with non-structural protein 4B. Interacts (via region D2) with RNA-directed RNA polymerase. Part of the viral assembly initiation complex composed of NS2, E1, E2, NS3, NS4A, NS5A and the mature core protein. Part of the replication complex composed of NS2, NS3, NS4A, NS4B, NS5A and the RNA-directed RNA polymerase embedded in an ER-derived membranous web. Interacts with host GRB2. Interacts with host BIN1. Interacts with host PIK3R1. Interacts with host SRCAP. Interacts with host FKBP8. Interacts (via C-terminus) with host VAPB (via MSP domain). Interacts with host EIF2AK2/PKR; this interaction leads to disruption of EIF2AK2 dimerization by NS5A and probably allows the virus to evade the innate immune response. Interacts (via N-terminus) with host PACSIN2 (via N-terminus); this interaction attenuates protein kinase C alpha-mediated phosphorylation of PACSIN2 by disrupting the interaction between PACSIN2 and PRKCA. Interacts (via N-terminus) with host SRC kinase (via SH2 domain). Interacts with most Src-family kinases. Interacts with host IFI27 and SKP2; promotes the ubiquitin-mediated proteasomal degradation of NS5A. Interacts with host GPS2. Interacts with host TNFRSF21; this interaction allows the modulation by the virus of JNK, p38 MAPK, STAT3, and Akt signaling pathways in a DR6-dependent manner. Interacts (via N-terminus) with host CIDEB (via N-terminus); this interaction seems to regulate the association of HCV particles with APOE. Interacts with host CHKA/Choline Kinase-alpha; CHKA bridges host PI4KA and NS5A and potentiates NS5A-stimulated PI4KA activity, which then facilitates the targeting of the ternary complex to the ER for viral replication. Interacts with host SPSB2 (via C-terminus); this interaction targets NS5A for ubiquitination and degradation. Interacts with host RAB18; this interaction may promote the association of NS5A and other replicase components with lipid droplets. Interacts (via region D2) with host PPIA/CYPA; the interaction stimulates RNA-binding ability of NS5A and is dependent on the peptidyl-prolyl cis-trans isomerase activity of PPIA/CYPA. Interacts with host TRIM14; this interaction induces the degradation of NS5A. In terms of assembly, homooligomer. Interacts with non-structural protein 5A. Interacts with host VAPB. Interacts with host PRK2/PKN2. Interacts with host HNRNPA1 and SEPT6; these interactions facilitate viral replication. Part of the replication complex composed of NS2, NS3, NS4A, NS4B, NS5A and the RNA-directed RNA polymerase. It depends on Zn(2+) as a cofactor. Requires Mg(2+) as cofactor. In terms of processing, specific enzymatic cleavages in vivo yield mature proteins. The structural proteins, core, E1, E2 and p7 are produced by proteolytic processing by host signal peptidases. The core protein precursor is synthesized as a 23 kDa, which is retained in the ER membrane through the hydrophobic signal peptide. Cleavage by the signal peptidase releases the 21 kDa mature core protein. The cleavage of the core protein precursor occurs between aminoacids 176 and 188 but the exact cleavage site is not known. Some degraded forms of the core protein appear as well during the course of infection. The other proteins (p7, NS2, NS3, NS4A, NS4B, NS5A and NS5B) are cleaved by the viral proteases. Autoprocessing between NS2 and NS3 is mediated by the NS2 cysteine protease catalytic domain and regulated by the NS3 N-terminal domain. Phosphorylated by host PKC and PKA. Post-translationally, ubiquitinated; mediated by UBE3A and leading to core protein subsequent proteasomal degradation. In terms of processing, highly N-glycosylated. Palmitoylation is required for NS2/3 autoprocessing and E2 recruitment to membranes. Post-translationally, palmitoylated. This modification may play a role in its polymerization or in protein-protein interactions. In terms of processing, phosphorylated on serines in a basal form termed p56. p58 is a hyperphosphorylated form of p56. p56 and p58 coexist in the cell in roughly equivalent amounts. Hyperphosphorylation is dependent on the presence of NS4A. Host CSNK1A1/CKI-alpha or RPS6KB1 kinases may be responsible for NS5A phosphorylation. Tyrosine phosphorylation is essential for the interaction with host SRC. Post-translationally, the N-terminus is phosphorylated by host PRK2/PKN2.

It localises to the host endoplasmic reticulum membrane. The protein resides in the host mitochondrion membrane. It is found in the virion. Its subcellular location is the host cytoplasm. The protein localises to the host nucleus. It localises to the host lipid droplet. The protein resides in the virion membrane. It is found in the host mitochondrion. Its subcellular location is the host cell membrane. The protein localises to the host perinuclear region. It catalyses the reaction Hydrolysis of four peptide bonds in the viral precursor polyprotein, commonly with Asp or Glu in the P6 position, Cys or Thr in P1 and Ser or Ala in P1'.. The enzyme catalyses a ribonucleoside 5'-triphosphate + H2O = a ribonucleoside 5'-diphosphate + phosphate + H(+). The catalysed reaction is ATP + H2O = ADP + phosphate + H(+). It carries out the reaction RNA(n) + a ribonucleoside 5'-triphosphate = RNA(n+1) + diphosphate. Its activity is regulated as follows. Inhibited by the antiviral drug hexamethylene amiloride. Inhibited by amantadine. Inhibition by amantadine appears to be genotype-dependent. Also inhibited by long-alkyl-chain iminosugar derivatives. With respect to regulation, activity is up-regulated by PRK2/PKN2-mediated phosphorylation. In terms of biological role, packages viral RNA to form a viral nucleocapsid, and promotes virion budding. Participates in the viral particle production as a result of its interaction with the non-structural protein 5A. Binds RNA and may function as a RNA chaperone to induce the RNA structural rearrangements taking place during virus replication. Modulates viral translation initiation by interacting with viral IRES and 40S ribosomal subunit. Affects various cell signaling pathways, host immunity and lipid metabolism. Prevents the establishment of cellular antiviral state by blocking the interferon-alpha/beta (IFN-alpha/beta) and IFN-gamma signaling pathways and by blocking the formation of phosphorylated STAT1 and promoting ubiquitin-mediated proteasome-dependent degradation of STAT1. Activates STAT3 leading to cellular transformation. Regulates the activity of cellular genes, including c-myc and c-fos. May repress the promoter of p53, and sequester CREB3 and SP110 isoform 3/Sp110b in the cytoplasm. Represses cell cycle negative regulating factor CDKN1A, thereby interrupting an important check point of normal cell cycle regulation. Targets transcription factors involved in the regulation of inflammatory responses and in the immune response: suppresses TNF-induced NF-kappa-B activation, and activates AP-1. Binds to dendritic cells (DCs) via C1QR1, resulting in down-regulation of T-lymphocytes proliferation. Alters lipid metabolism by interacting with hepatocellular proteins involved in lipid accumulation and storage. Induces up-regulation of FAS promoter activity, and thereby contributes to the increased triglyceride accumulation in hepatocytes (steatosis). Its function is as follows. Forms a heterodimer with envelope glycoprotein E2, which mediates virus attachment to the host cell, virion internalization through clathrin-dependent endocytosis and fusion with host membrane. Fusion with the host cell is most likely mediated by both E1 and E2, through conformational rearrangements of the heterodimer required for fusion rather than a classical class II fusion mechanism. E1/E2 heterodimer binds host apolipoproteins such as APOB and APOE thereby forming a lipo-viro-particle (LVP). APOE associated to the LVP allows the initial virus attachment to cell surface receptors such as the heparan sulfate proteoglycans (HSPGs), syndecan-1 (SDC1), syndecan-1 (SDC2), the low-density lipoprotein receptor (LDLR) and scavenger receptor class B type I (SCARB1). The cholesterol transfer activity of SCARB1 allows E2 exposure and binding of E2 to SCARB1 and the tetraspanin CD81. E1/E2 heterodimer binding on CD81 activates the epithelial growth factor receptor (EGFR) signaling pathway. Diffusion of the complex E1-E2-EGFR-SCARB1-CD81 to the cell lateral membrane allows further interaction with Claudin 1 (CLDN1) and occludin (OCLN) to finally trigger HCV entry. Forms a heterodimer with envelope glycoprotein E1, which mediates virus attachment to the host cell, virion internalization through clathrin-dependent endocytosis and fusion with host membrane. Fusion with the host cell is most likely mediated by both E1 and E2, through conformational rearrangements of the heterodimer required for fusion rather than a classical class II fusion mechanism. The interaction between envelope glycoprotein E2 and host apolipoprotein E/APOE allows the proper assembly, maturation and infectivity of the viral particles. This interaction is probably promoted via the up-regulation of cellular autophagy by the virus. E1/E2 heterodimer binds host apolipoproteins such as APOB and APOE thereby forming a lipo-viro-particle (LVP). APOE associated to the LVP allows the initial virus attachment to cell surface receptors such as the heparan sulfate proteoglycans (HSPGs), syndecan-1 (SDC1), syndecan-1 (SDC2), the low-density lipoprotein receptor (LDLR) and scavenger receptor class B type I (SCARB1). The cholesterol transfer activity of SCARB1 allows E2 exposure and binding of E2 to SCARB1 and the tetraspanin CD81. E1/E2 heterodimer binding on CD81 activates the epithelial growth factor receptor (EGFR) signaling pathway. Diffusion of the complex E1-E2-EGFR-SCARB1-CD81 to the cell lateral membrane allows further interaction with Claudin 1 (CLDN1) and occludin (OCLN) to finally trigger HCV entry. Inhibits host EIF2AK2/PKR activation, preventing the establishment of an antiviral state. Viral ligand for CD209/DC-SIGN and CLEC4M/DC-SIGNR, which are respectively found on dendritic cells (DCs), and on liver sinusoidal endothelial cells and macrophage-like cells of lymph node sinuses. These interactions allow the capture of circulating HCV particles by these cells and subsequent transmission to permissive cells. Capture of circulating HCV particles by these SIGN+ cells may facilitate virus infection of proximal hepatocytes and lymphocyte subpopulations and may be essential for the establishment of persistent infection. Functionally, ion channel protein that acts as a viroporin and plays an essential role in the assembly, envelopment and secretion of viral particles. Regulates the host cell secretory pathway, which induces the intracellular retention of viral glycoproteins and favors assembly of viral particles. Creates a pore in acidic organelles and releases Ca(2+) and H(+) in the cytoplasm of infected cells, leading to a productive viral infection. High levels of cytoplasmic Ca(2+) may trigger membrane trafficking and transport of viral ER-associated proteins to viroplasms, sites of viral genome replication. This ionic imbalance induces the assembly of the inflammasome complex, which triggers the maturation of pro-IL-1beta into IL-1beta through the action of caspase-1. Targets also host mitochondria and induces mitochondrial depolarization. In addition of its role as a viroporin, acts as a lipid raft adhesion factor. In terms of biological role, cysteine protease required for the proteolytic auto-cleavage between the non-structural proteins NS2 and NS3. The N-terminus of NS3 is required for the function of NS2 protease (active region NS2-3). Promotes the initiation of viral particle assembly by mediating the interaction between structural and non-structural proteins. Its function is as follows. Displays three enzymatic activities: serine protease with a chymotrypsin-like fold, NTPase and RNA helicase. NS3 serine protease, in association with NS4A, is responsible for the cleavages of NS3-NS4A, NS4A-NS4B, NS4B-NS5A and NS5A-NS5B. The NS3/NS4A complex prevents phosphorylation of host IRF3, thus preventing the establishment of dsRNA induced antiviral state. The NS3/NS4A complex induces host amino acid transporter component SLC3A2, thus contributing to HCV propagation. NS3 RNA helicase binds to RNA and unwinds both dsDNA and dsRNA in the 3' to 5' direction, and likely resolves RNA complicated stable secondary structures in the template strand. Binds a single ATP and catalyzes the unzipping of a single base pair of dsRNA. Inhibits host antiviral proteins TBK1 and IRF3 thereby preventing the establishment of an antiviral state. Cleaves host MAVS/CARDIF thereby preventing the establishment of an antiviral state. Cleaves host TICAM1/TRIF, thereby disrupting TLR3 signaling and preventing the establishment of an antiviral state. Induces a specific membrane alteration that serves as a scaffold for the virus replication complex. This membrane alteration gives rise to the so-called ER-derived membranous web that contains the replication complex. NS4B self-interaction contributes to its function in membranous web formation. Promotes host TRIF protein degradation in a CASP8-dependent manner thereby inhibiting host TLR3-mediated interferon signaling. Disrupts the interaction between STING and TBK1 contributing to the inhibition of interferon signaling. Functionally, phosphorylated protein that is indispensable for viral replication and assembly. Both hypo- and hyperphosphorylated states are required for the viral life cycle. The hyperphosphorylated form of NS5A is an inhibitor of viral replication. Involved in RNA-binding and especially in binding to the viral genome. Zinc is essential for RNA-binding. Participates in the viral particle production as a result of its interaction with the mature viral core protein. Its interaction with host VAPB may target the viral replication complex to vesicles. Down-regulates viral IRES translation initiation. Mediates interferon resistance, presumably by interacting with and inhibiting host EIF2AK2/PKR. Prevents BIN1-induced apoptosis. Acts as a transcriptional activator of some host genes important for viral replication when localized in the nucleus. Via the interaction with host PACSIN2, modulates lipid droplet formation in order to promote virion assembly. Modulates TNFRSF21/DR6 signaling pathway for viral propagation. In terms of biological role, RNA-dependent RNA polymerase that performs primer-template recognition and RNA synthesis during viral replication. Initiates RNA transcription/replication at a flavin adenine dinucleotide (FAD), resulting in a 5'- FAD cap on viral RNAs. In this way, recognition of viral 5' RNA by host pattern recognition receptors can be bypassed, thereby evading activation of antiviral pathways. The polypeptide is Genome polyprotein (Hepatitis C virus genotype 1b (strain HC-J4) (HCV)).